A 265-amino-acid chain; its full sequence is uncharacterized protein (265 aa).

Disordered regions lie at residues 62-94 (RNKK…ALGK) and 118-149 (MVPG…RPNP). A compositionally biased stretch (basic and acidic residues) spans 126–139 (DGPKKSDTDIKDAV).

This is an uncharacterized protein from Homo sapiens (Human).